A 572-amino-acid polypeptide reads, in one-letter code: Phosphoglucomutase-2 (572 aa).

Residues Thr-23, Arg-27, 126–127 (SH), and Lys-140 each bind substrate. Ser-126 acts as the Phosphoserine intermediate in catalysis. Ser-126 is a binding site for Mg(2+). Mg(2+)-binding residues include Asp-308, Asp-310, and Asp-312. Substrate-binding positions include 312–313 (DR), Thr-373, 392–394 (EES), Lys-405, and Arg-527.

It belongs to the phosphohexose mutase family. It depends on Mg(2+) as a cofactor. In terms of processing, phosphorylated via a calcium-dependent protein kinase.

Its subcellular location is the cytoplasm. It carries out the reaction alpha-D-glucose 1-phosphate = alpha-D-glucose 6-phosphate. Functionally, may be involved in membrane fusion in exocytosis. This Paramecium tetraurelia protein is Phosphoglucomutase-2 (pp63-2).